A 296-amino-acid chain; its full sequence is 4-hydroxy-tetrahydrodipicolinate synthase (296 aa).

Thr-49 contacts pyruvate. Residue Tyr-137 is the Proton donor/acceptor of the active site. Lys-165 (schiff-base intermediate with substrate) is an active-site residue. Residue Ile-208 participates in pyruvate binding.

The protein belongs to the DapA family. In terms of assembly, homotetramer; dimer of dimers.

Its subcellular location is the cytoplasm. It carries out the reaction L-aspartate 4-semialdehyde + pyruvate = (2S,4S)-4-hydroxy-2,3,4,5-tetrahydrodipicolinate + H2O + H(+). The protein operates within amino-acid biosynthesis; L-lysine biosynthesis via DAP pathway; (S)-tetrahydrodipicolinate from L-aspartate: step 3/4. Catalyzes the condensation of (S)-aspartate-beta-semialdehyde [(S)-ASA] and pyruvate to 4-hydroxy-tetrahydrodipicolinate (HTPA). In Ehrlichia canis (strain Jake), this protein is 4-hydroxy-tetrahydrodipicolinate synthase.